Consider the following 223-residue polypeptide: ATP phosphoribosyltransferase (223 aa).

It belongs to the ATP phosphoribosyltransferase family. Short subfamily. As to quaternary structure, heteromultimer composed of HisG and HisZ subunits.

It is found in the cytoplasm. It catalyses the reaction 1-(5-phospho-beta-D-ribosyl)-ATP + diphosphate = 5-phospho-alpha-D-ribose 1-diphosphate + ATP. Its pathway is amino-acid biosynthesis; L-histidine biosynthesis; L-histidine from 5-phospho-alpha-D-ribose 1-diphosphate: step 1/9. Catalyzes the condensation of ATP and 5-phosphoribose 1-diphosphate to form N'-(5'-phosphoribosyl)-ATP (PR-ATP). Has a crucial role in the pathway because the rate of histidine biosynthesis seems to be controlled primarily by regulation of HisG enzymatic activity. This Novosphingobium aromaticivorans (strain ATCC 700278 / DSM 12444 / CCUG 56034 / CIP 105152 / NBRC 16084 / F199) protein is ATP phosphoribosyltransferase.